A 199-amino-acid chain; its full sequence is Pneumococcal vaccine antigen A homolog (199 aa).

The protein localises to the cell surface. The sequence is that of Pneumococcal vaccine antigen A homolog (pvaA) from Streptococcus pyogenes serotype M1.